Consider the following 372-residue polypeptide: uncharacterized protein (372 aa).

4-18 (YIIVGAGILGASTAY) is a binding site for FAD.

It belongs to the DadA oxidoreductase family. It depends on FAD as a cofactor.

This is an uncharacterized protein from Bacillus subtilis (strain 168).